Reading from the N-terminus, the 329-residue chain is Prostaglandin reductase 1 (329 aa).

The residue at position 18 (Thr-18) is a Phosphothreonine. The residue at position 20 (Ser-20) is a Phosphoserine. Residues 152–155 (GAVG), Lys-178, Tyr-193, Asn-217, 239–245 (CGAISQY), 270–272 (FIV), and Asn-321 contribute to the NADP(+) site. Lys-178 carries the N6-(2-hydroxyisobutyryl)lysine; alternate modification. Lys-178 is modified (N6-acetyllysine; alternate).

It belongs to the NADP-dependent oxidoreductase L4BD family. As to quaternary structure, monomer or homodimer.

Its subcellular location is the cytoplasm. The enzyme catalyses 13,14-dihydro-15-oxo-prostaglandin E1 + NADP(+) = 15-oxoprostaglandin E1 + NADPH + H(+). The catalysed reaction is 13,14-dihydro-15-oxo-prostaglandin E2 + NADP(+) = 15-oxoprostaglandin E2 + NADPH + H(+). It catalyses the reaction 13,14-dihydro-15-oxo-prostaglandin F1alpha + NADP(+) = 15-oxoprostaglandin F1alpha + NADPH + H(+). It carries out the reaction 13,14-dihydro-15-oxo-PGF2alpha + NADP(+) = 15-oxoprostaglandin F2alpha + NADPH + H(+). The enzyme catalyses leukotriene B4 + NADP(+) = 12-oxo-leukotriene B4 + NADPH + H(+). The catalysed reaction is 20-hydroxy-leukotriene B4 + NADP(+) = 12-oxo-20-hydroxy-leukotriene B4 + NADPH + H(+). It catalyses the reaction 6-trans-leukotriene B4 + NADP(+) = 12-oxo-(5S)-hydroxy-(6E,8E,10E,14Z)-eicosatetraenoate + NADPH + H(+). It carries out the reaction (5S,12S)-dihydroxy-(6E,10E,12E,14Z)-eicosatetraenoate + NADP(+) = 12-oxo-(5S)-hydroxy-(6E,8E,10E,14Z)-eicosatetraenoate + NADPH + H(+). The enzyme catalyses an n-alkanal + NADP(+) = an alk-2-enal + NADPH + H(+). The catalysed reaction is hexanal + NADP(+) = (E)-hex-2-enal + NADPH + H(+). It catalyses the reaction octanal + NADP(+) = (2E)-octenal + NADPH + H(+). It carries out the reaction decanal + NADP(+) = (2E)-decenal + NADPH + H(+). The enzyme catalyses dodecanal + NADP(+) = (2E)-dodecenal + NADPH + H(+). The catalysed reaction is 4-hydroxynonanal + NADP(+) = (E)-4-hydroxynon-2-enal + NADPH + H(+). It catalyses the reaction pentan-2-one + NADP(+) = (E)-pent-3-en-2-one + NADPH + H(+). It carries out the reaction nonan-2-one + NADP(+) = (3E)-nonen-2-one + NADPH + H(+). NAD(P)H-dependent oxidoreductase involved in metabolic inactivation of pro- and anti-inflammatory eicosanoids: prostaglandins (PG), leukotrienes (LT) and lipoxins (LX). Catalyzes with high efficiency the reduction of the 13,14 double bond of 15-oxoPGs, including 15-oxo-PGE1, 15-oxo-PGE2, 15-oxo-PGF1-alpha and 15-oxo-PGF2-alpha. Catalyzes with lower efficiency the oxidation of the hydroxyl group at C12 of LTB4 and its derivatives, converting them into biologically less active 12-oxo-LTB4 metabolites. Reduces 15-oxo-LXA4 to 13,14 dihydro-15-oxo-LXA4, enhancing neutrophil recruitment at the inflammatory site. Plays a role in metabolic detoxification of alkenals and ketones. Reduces alpha,beta-unsaturated alkenals and ketones, particularly those with medium-chain length, showing highest affinity toward (2E)-decenal and (3E)-3-nonen-2-one. Inactivates 4-hydroxy-2-nonenal, a cytotoxic lipid constituent of oxidized low-density lipoprotein particles. The sequence is that of Prostaglandin reductase 1 (Ptgr1) from Rattus norvegicus (Rat).